Consider the following 807-residue polypeptide: Mechanosensitive cation channel TMEM63A (807 aa).

Residues 1-51 (MMDSPFLELWQSKAVSIREQLGLGDRPNDSYCYNSAKNSTVLQGVTFGGIP) lie on the Extracellular side of the membrane. The N-linked (GlcNAc...) asparagine glycan is linked to asparagine 38. The chain crosses the membrane as a helical span at residues 52–74 (TVLLIDVSCFLFLILVFSIIRRR). The Cytoplasmic segment spans residues 75–134 (FWDYGRIALVSEADSESRFQRLSSTSSSGQQDFENELGCCPWLTAIFRLHDDQILEWCGE). A helical membrane pass occupies residues 135–167 (DAIHYLSFQRHIIFLLVVVSFLSLCVILPVNLS). Residues 168–191 (GDLLDKDPYSFGRTTIANLQTDND) are Extracellular-facing. The chain crosses the membrane as a helical span at residues 192 to 217 (LLWLHTIFAVIYLFLTVGFMRHHTQS). Topologically, residues 218–416 (IKYKEENLVR…CWKNLSIQGL (199 aa)) are cytoplasmic. Positions 219-414 (KYKEENLVRR…DICWKNLSIQ (196 aa)) are intracellular linker IL2; confers mechanosensitivity. A helical transmembrane segment spans residues 417-444 (RWWLQWLGINFTLFLGLFFLTTPSIILS). At 445–462 (TMDKFNVTKPIHALNNPI) the chain is on the extracellular side. N-linked (GlcNAc...) asparagine glycosylation is present at asparagine 450. The chain crosses the membrane as a helical span at residues 463 to 490 (ISQFFPTLLLWSFSALLPSIVYYSTLLE). Residues 491 to 495 (SHWTK) are Cytoplasmic-facing. Residues 496–532 (SGENQIMMTKVYIFLIFMVLILPSLGLTSLDFFFRWL) traverse the membrane as a helical segment. Residues 533–554 (FDKTSSEASIRLECVFLPDQGA) lie on the Extracellular side of the membrane. The helical transmembrane segment at 555-586 (FFVNYVIASAFIGNGMELLRLPGLILYTFRMI) threads the bilayer. A gating helix region spans residues 555-586 (FFVNYVIASAFIGNGMELLRLPGLILYTFRMI). Over 587-606 (MAKTAADRRNVKQNQAFQYE) the chain is Cytoplasmic. Residues 607–624 (FGAMYAWMLCVFTVIVAY) form a helical membrane-spanning segment. At 625-628 (SITC) the chain is on the extracellular side. A helical transmembrane segment spans residues 629-651 (PIIAPFGLIYILLKHMVDRHNLY). Residues 652-661 (FVYLPAKLEK) lie on the Cytoplasmic side of the membrane. The helical transmembrane segment at 662 to 689 (GIHFAAVNQALAAPILCLFWLYFFSFLR) threads the bilayer. Over 690–694 (LGMKA) the chain is Extracellular. The chain crosses the membrane as a helical span at residues 695-709 (PATLFTFLVLLLTIL). At 710–807 (VCLAHTCFGC…GSVAAAPQEA (98 aa)) the chain is on the cytoplasmic side. At serine 739 the chain carries Phosphoserine.

It belongs to the CSC1 (TC 1.A.17) family. In terms of assembly, monomer. N-Glycosylated.

The protein resides in the lysosome membrane. The protein localises to the early endosome membrane. Its subcellular location is the cell membrane. It carries out the reaction Ca(2+)(in) = Ca(2+)(out). Its function is as follows. Mechanosensitive cation channel with low conductance and high activation threshold. In contrast to TMEM63B, does not show phospholipid scramblase activity. Acts as a regulator of lysosomal morphology by mediating lysosomal mechanosensitivity. Important for the baby's first breath and respiration throughout life. Upon lung inflation conducts cation currents in alveolar type 1 and 2 cells triggering lamellar body exocytosis and surfactant secretion into airspace. Also acts as an osmosensitive cation channel preferentially activated by hypotonic stress. The polypeptide is Mechanosensitive cation channel TMEM63A (Homo sapiens (Human)).